The chain runs to 39 residues: Potassium channel toxin alpha-KTx 31.1 (39 aa).

Intrachain disulfides connect cysteine 7–cysteine 30, cysteine 13–cysteine 35, and cysteine 17–cysteine 37.

It belongs to the short scorpion toxin superfamily. Potassium channel inhibitor family. Alpha-KTx 31 subfamily. Expressed by the venom gland.

The protein localises to the secreted. Its function is as follows. Voltage-gated potassium channel inhibitor. 1 uM of the native toxin inhibits rat Kv1.2/KCNA2 (100% inhibition), and drosophila Shaker IR/Sh (100%), human Kv1.3/KCNA3 (83%), rat Kv1.1/KCNA1 (32%) and rat Kv1.6/KCNA6 (21%). In Buthus occitanus tunetanus (Common European scorpion), this protein is Potassium channel toxin alpha-KTx 31.1.